A 439-amino-acid chain; its full sequence is Ribosomal protein uS12 methylthiotransferase RimO (439 aa).

In terms of domain architecture, MTTase N-terminal spans 6–116; the sequence is GKVGFVSLGC…VMNQVHQVAP (111 aa). [4Fe-4S] cluster is bound by residues Cys15, Cys51, Cys80, Cys148, Cys152, and Cys155. The 238-residue stretch at 134-371 folds into the Radical SAM core domain; sequence LTPKHYAYLK…MEVQQRISAS (238 aa). Residues 374–439 form the TRAM domain; it reads QAKIGKRMDV…DEYDLWGRPV (66 aa).

This sequence belongs to the methylthiotransferase family. RimO subfamily. [4Fe-4S] cluster serves as cofactor.

The protein localises to the cytoplasm. It catalyses the reaction L-aspartate(89)-[ribosomal protein uS12]-hydrogen + (sulfur carrier)-SH + AH2 + 2 S-adenosyl-L-methionine = 3-methylsulfanyl-L-aspartate(89)-[ribosomal protein uS12]-hydrogen + (sulfur carrier)-H + 5'-deoxyadenosine + L-methionine + A + S-adenosyl-L-homocysteine + 2 H(+). Functionally, catalyzes the methylthiolation of an aspartic acid residue of ribosomal protein uS12. The polypeptide is Ribosomal protein uS12 methylthiotransferase RimO (Hahella chejuensis (strain KCTC 2396)).